The chain runs to 158 residues: ATP synthase subunit delta, mitochondrial (158 aa).

The transit peptide at 1–22 (MFRLTSARALFRVANVAARRTY) directs the protein to the mitochondrion.

This sequence belongs to the ATPase epsilon chain family. As to quaternary structure, F-type ATPases have 2 components, CF(1) - the catalytic core - and CF(0) - the membrane proton channel. CF(1) has five subunits: alpha(3), beta(3), gamma(1), delta(1), epsilon(1). CF(0) has three main subunits: a, b and c.

It localises to the mitochondrion. The protein resides in the mitochondrion inner membrane. In terms of biological role, mitochondrial membrane ATP synthase (F(1)F(0) ATP synthase or Complex V) produces ATP from ADP in the presence of a proton gradient across the membrane which is generated by electron transport complexes of the respiratory chain. F-type ATPases consist of two structural domains, F(1) - containing the extramembraneous catalytic core, and F(0) - containing the membrane proton channel, linked together by a central stalk and a peripheral stalk. During catalysis, ATP turnover in the catalytic domain of F(1) is coupled via a rotary mechanism of the central stalk subunits to proton translocation. Part of the complex F(1) domain and of the central stalk which is part of the complex rotary element. Rotation of the central stalk against the surrounding alpha(3)beta(3) subunits leads to hydrolysis of ATP in three separate catalytic sites on the beta subunits. The protein is ATP synthase subunit delta, mitochondrial (ATP16) of Eremothecium gossypii (strain ATCC 10895 / CBS 109.51 / FGSC 9923 / NRRL Y-1056) (Yeast).